Consider the following 152-residue polypeptide: Deoxyuridine 5'-triphosphate nucleotidohydrolase (152 aa).

Substrate-binding positions include 71 to 73, N84, 88 to 90, and M98; these read RSG and LID.

Belongs to the dUTPase family. Mg(2+) is required as a cofactor.

The enzyme catalyses dUTP + H2O = dUMP + diphosphate + H(+). Its pathway is pyrimidine metabolism; dUMP biosynthesis; dUMP from dCTP (dUTP route): step 2/2. Functionally, this enzyme is involved in nucleotide metabolism: it produces dUMP, the immediate precursor of thymidine nucleotides and it decreases the intracellular concentration of dUTP so that uracil cannot be incorporated into DNA. The protein is Deoxyuridine 5'-triphosphate nucleotidohydrolase of Klebsiella pneumoniae subsp. pneumoniae (strain ATCC 700721 / MGH 78578).